Here is a 533-residue protein sequence, read N- to C-terminus: Lanosterol 14-alpha demethylase (533 aa).

Cys-472 is a binding site for heme.

Belongs to the cytochrome P450 family. Heme serves as cofactor.

It localises to the membrane. It catalyses the reaction a 14alpha-methyl steroid + 3 reduced [NADPH--hemoprotein reductase] + 3 O2 = a Delta(14) steroid + formate + 3 oxidized [NADPH--hemoprotein reductase] + 4 H2O + 4 H(+). The catalysed reaction is a 14alpha-methyl steroid + reduced [NADPH--hemoprotein reductase] + O2 = a 14alpha-hydroxymethyl steroid + oxidized [NADPH--hemoprotein reductase] + H2O + H(+). It carries out the reaction a 14alpha-hydroxymethyl steroid + reduced [NADPH--hemoprotein reductase] + O2 = a 14alpha-formyl steroid + oxidized [NADPH--hemoprotein reductase] + 2 H2O + H(+). The enzyme catalyses a 14alpha-formyl steroid + reduced [NADPH--hemoprotein reductase] + O2 = a Delta(14) steroid + formate + oxidized [NADPH--hemoprotein reductase] + H2O + 2 H(+). It catalyses the reaction lanosterol + 3 reduced [NADPH--hemoprotein reductase] + 3 O2 = 4,4-dimethyl-5alpha-cholesta-8,14,24-trien-3beta-ol + formate + 3 oxidized [NADPH--hemoprotein reductase] + 4 H2O + 4 H(+). The catalysed reaction is lanosterol + reduced [NADPH--hemoprotein reductase] + O2 = 32-hydroxylanosterol + oxidized [NADPH--hemoprotein reductase] + H2O + H(+). It carries out the reaction 32-hydroxylanosterol + reduced [NADPH--hemoprotein reductase] + O2 = 32-oxolanosterol + oxidized [NADPH--hemoprotein reductase] + 2 H2O + H(+). The enzyme catalyses 32-oxolanosterol + reduced [NADPH--hemoprotein reductase] + O2 = 4,4-dimethyl-5alpha-cholesta-8,14,24-trien-3beta-ol + formate + oxidized [NADPH--hemoprotein reductase] + H2O + 2 H(+). It catalyses the reaction eburicol + 3 reduced [NADPH--hemoprotein reductase] + 3 O2 = 14-demethyleburicol + formate + 3 oxidized [NADPH--hemoprotein reductase] + 4 H2O + 4 H(+). The catalysed reaction is eburicol + reduced [NADPH--hemoprotein reductase] + O2 = 32-hydroxyeburicol + oxidized [NADPH--hemoprotein reductase] + H2O + H(+). It carries out the reaction 32-hydroxyeburicol + reduced [NADPH--hemoprotein reductase] + O2 = 32-oxoeburicol + oxidized [NADPH--hemoprotein reductase] + 2 H2O + H(+). The enzyme catalyses 32-oxoeburicol + reduced [NADPH--hemoprotein reductase] + O2 = 14-demethyleburicol + formate + oxidized [NADPH--hemoprotein reductase] + H2O + 2 H(+). It participates in steroid biosynthesis; zymosterol biosynthesis; zymosterol from lanosterol: step 1/6. Functionally, sterol 14alpha-demethylase that plays a critical role in the third module of ergosterol biosynthesis pathway, being ergosterol the major sterol component in fungal membranes that participates in a variety of functions. The third module or late pathway involves the ergosterol synthesis itself through consecutive reactions that mainly occur in the endoplasmic reticulum (ER) membrane. In filamentous fungi, during the initial step of this module, lanosterol (lanosta-8,24-dien-3beta-ol) can be metabolized to eburicol. Sterol 14alpha-demethylase catalyzes the three-step oxidative removal of the 14alpha-methyl group (C-32) of both these sterols in the form of formate, and converts eburicol and lanosterol to 14-demethyleburicol (4,4,24-trimethylergosta-8,14,24(28)-trienol) and 4,4-dimethyl-5alpha-cholesta-8,14,24-trien-3beta-ol, respectively, which are further metabolized by other enzymes in the pathway to ergosterol. Can also use substrates not intrinsic to fungi, such as 24,25-dihydrolanosterol (DHL), producing 4,4-dimethyl-8,14-cholestadien-3-beta-ol, but at lower rates than the endogenous substrates. This chain is Lanosterol 14-alpha demethylase (ERG11), found in Candida glabrata (strain ATCC 2001 / BCRC 20586 / JCM 3761 / NBRC 0622 / NRRL Y-65 / CBS 138) (Yeast).